Consider the following 546-residue polypeptide: Probable malate:quinone oxidoreductase (546 aa).

The protein belongs to the MQO family. FAD serves as cofactor.

The enzyme catalyses (S)-malate + a quinone = a quinol + oxaloacetate. Its pathway is carbohydrate metabolism; tricarboxylic acid cycle; oxaloacetate from (S)-malate (quinone route): step 1/1. The chain is Probable malate:quinone oxidoreductase from Acinetobacter baumannii (strain ACICU).